Reading from the N-terminus, the 141-residue chain is Hemoglobin subunit alpha (141 aa).

Positions 1-141 (VLSAADKTAI…VATALGSHYR (141 aa)) constitute a Globin domain. His59 serves as a coordination point for O2. Heme b is bound at residue His88.

Belongs to the globin family. In terms of assembly, heterotetramer of two alpha chains and two beta chains. As to expression, red blood cells.

Its function is as follows. Involved in oxygen transport from the lung to the various peripheral tissues. The protein is Hemoglobin subunit alpha (HBA) of Squalus acanthias (Spiny dogfish).